Consider the following 197-residue polypeptide: Recombination protein RecR (197 aa).

The segment at 56-71 adopts a C4-type zinc-finger fold; it reads CHVCGNYCESDTCNIC. One can recognise a Toprim domain in the interval 79 to 174; that stretch reads RIICVVEESK…KITKLASGIP (96 aa).

It belongs to the RecR family.

Functionally, may play a role in DNA repair. It seems to be involved in an RecBC-independent recombinational process of DNA repair. It may act with RecF and RecO. This Fusobacterium nucleatum subsp. nucleatum (strain ATCC 25586 / DSM 15643 / BCRC 10681 / CIP 101130 / JCM 8532 / KCTC 2640 / LMG 13131 / VPI 4355) protein is Recombination protein RecR.